The primary structure comprises 692 residues: SH3 domain-containing protein 21 (692 aa).

The segment at 1–60 is disordered; the sequence is MVQSELQLQPRAGGRAEAASWGDRGNDKGGFGNPDMPSVSPGPQRPPKLSSLAYDSPPDY. The region spanning 65-126 is the SH3 domain; that stretch reads SHPEAYRVLF…PDNFVLPPPP (62 aa). 3 disordered regions span residues 132 to 501, 536 to 605, and 672 to 692; these read PRKV…EVLP, PKGG…SQET, and VMQG…TQTY. Over residues 177 to 186 the composition is skewed to basic and acidic residues; sequence PSRDSQKLTS. Residues 210–220 show a composition bias toward polar residues; sequence TQTPQQRSVSS. Composition is skewed to basic and acidic residues over residues 378-396, 490-501, and 542-582; these read VSTR…EALQ, NEERLLRGEVLP, and SKEE…KEEV. Residues 628–678 adopt a coiled-coil conformation; sequence SLRGEVESLRRALELMGVQLERKLTDIWEELKSEKEQRQRLEVQVMQGTQK. Polar residues predominate over residues 673–692; it reads MQGTQKSQTPRIIHAQTQTY.

This chain is SH3 domain-containing protein 21 (SH3D21), found in Macaca fascicularis (Crab-eating macaque).